Consider the following 70-residue polypeptide: NAD(P)H-quinone oxidoreductase subunit L (70 aa).

The next 2 membrane-spanning stretches (helical) occupy residues 2 to 22 (IVPL…PVAL) and 39 to 59 (TFMY…SPFV).

The protein belongs to the complex I NdhL subunit family. NDH-1 can be composed of about 15 different subunits; different subcomplexes with different compositions have been identified which probably have different functions.

Its subcellular location is the cellular thylakoid membrane. The catalysed reaction is a plastoquinone + NADH + (n+1) H(+)(in) = a plastoquinol + NAD(+) + n H(+)(out). It catalyses the reaction a plastoquinone + NADPH + (n+1) H(+)(in) = a plastoquinol + NADP(+) + n H(+)(out). Functionally, NDH-1 shuttles electrons from an unknown electron donor, via FMN and iron-sulfur (Fe-S) centers, to quinones in the respiratory and/or the photosynthetic chain. The immediate electron acceptor for the enzyme in this species is believed to be plastoquinone. Couples the redox reaction to proton translocation, and thus conserves the redox energy in a proton gradient. Cyanobacterial NDH-1 also plays a role in inorganic carbon-concentration. The protein is NAD(P)H-quinone oxidoreductase subunit L of Trichormus variabilis (strain ATCC 29413 / PCC 7937) (Anabaena variabilis).